A 153-amino-acid chain; its full sequence is uncharacterized protein (153 aa).

Disordered regions lie at residues 24 to 87 (PEDS…DRPL) and 101 to 153 (GDPR…RIPS). Residues 27 to 37 (SSCPCPRLPLS) are compositionally biased toward low complexity. Over residues 143-153 (TRKESSCRIPS) the composition is skewed to basic and acidic residues.

This is an uncharacterized protein from Dryophytes versicolor (chameleon treefrog).